A 225-amino-acid polypeptide reads, in one-letter code: uncharacterized protein (225 aa).

The Fe2OG dioxygenase domain maps to 114-219 (DAEAIIMQVY…RLSVTMRRII (106 aa)).

This sequence belongs to the iron/ascorbate-dependent oxidoreductase family.

The protein resides in the cytoplasm. Its subcellular location is the nucleus. This is an uncharacterized protein from Schizosaccharomyces pombe (strain 972 / ATCC 24843) (Fission yeast).